The sequence spans 288 residues: MIILVLLISYSFGKTQDGKDQLSPNYPYGKMNKDVNFNKPFTSAVDSYQIQQYAENGVFSANQENYVRAKCKTCCRVIFASDYNYKTNTQFTDEDDKKGDERYVMDMEFDDKRSVRFRNGGYEQNILLRPLKQGNELQFFEFAPYRMYTSYAIPKRVHDIRGGANEGATLIIWPKNPPLSDAPGTRNQRFVYVHPYPTEWYPEYNSTTKYTQNGKTVIKTLKWPTYKRHFYLPYRLDVDLCYQARKATDGRSTWTGNKNLNTTSKSYQIIASRCSATEARQIFIPVFA.

The signal sequence occupies residues 1–15 (MIILVLLISYSFGKT). N205 and N261 each carry an N-linked (GlcNAc...) asparagine glycan.

In terms of assembly, heterodimer composed of a 170 kDa heavy subunit (hgl) and a 31/35 kDa light subunit (lgl); disulfide-linked.

Its subcellular location is the cell membrane. Its function is as follows. Light subunit of a heterodimeric lectin; the heavy subunit binds galactose and N-acetyl-D-galactosamine of host glycoproteins and thus mediates adhesion to host cells. The protein is Galactose/N-acetyl-D-galactosamine lectin light subunit 1 of Entamoeba histolytica (strain ATCC 30459 / HM-1:IMSS / ABRM).